The primary structure comprises 234 residues: Biotin transport ATP-binding protein BioM (234 aa).

The 230-residue stretch at 1 to 230 (MQAIDIGHVT…YIAAMQALAR (230 aa)) folds into the ABC transporter domain. 35 to 42 (GRNGAGKS) is an ATP binding site.

This sequence belongs to the ABC transporter superfamily. As to quaternary structure, part of a biotin transporter holocomplex composed of BioM, BioN and BioY. BioMN complexes can be readily purified, but not BioMY complexes. Only the BioMNY complex has ATPase activity.

It is found in the cell inner membrane. Its function is as follows. Required for biotin uptake under very low (pM) biotin concentrations but not under higher (nM) concentrations. The polypeptide is Biotin transport ATP-binding protein BioM (bioM) (Rhodobacter capsulatus (strain ATCC BAA-309 / NBRC 16581 / SB1003)).